The primary structure comprises 498 residues: ATP synthase subunit beta, chloroplastic (498 aa).

172–179 contributes to the ATP binding site; it reads GGAGVGKT.

The protein belongs to the ATPase alpha/beta chains family. In terms of assembly, F-type ATPases have 2 components, CF(1) - the catalytic core - and CF(0) - the membrane proton channel. CF(1) has five subunits: alpha(3), beta(3), gamma(1), delta(1), epsilon(1). CF(0) has four main subunits: a(1), b(1), b'(1) and c(9-12).

It is found in the plastid. It localises to the chloroplast thylakoid membrane. It catalyses the reaction ATP + H2O + 4 H(+)(in) = ADP + phosphate + 5 H(+)(out). In terms of biological role, produces ATP from ADP in the presence of a proton gradient across the membrane. The catalytic sites are hosted primarily by the beta subunits. The polypeptide is ATP synthase subunit beta, chloroplastic (Hyphaene coriacea (Ilala palm)).